Reading from the N-terminus, the 289-residue chain is Cell division protein ZipA (289 aa).

Residue Met-1 is a topological domain, periplasmic. Residues 2–22 (DIGLREWLIVIGLIVIAGILF) traverse the membrane as a helical segment. The Cytoplasmic segment spans residues 23-289 (DGWRRMRGGK…HERRSLMQKR (267 aa)). The interval 66-141 (REPSFDEQDL…KEREKAPAVA (76 aa)) is disordered. Residues 81–99 (REAKERKGGKRQEEPRQGD) are compositionally biased toward basic and acidic residues. The segment covering 100–114 (LDLDEGLALEADPSD) has biased composition (acidic residues).

This sequence belongs to the ZipA family. As to quaternary structure, interacts with FtsZ via their C-terminal domains.

The protein localises to the cell inner membrane. Its function is as follows. Essential cell division protein that stabilizes the FtsZ protofilaments by cross-linking them and that serves as a cytoplasmic membrane anchor for the Z ring. Also required for the recruitment to the septal ring of downstream cell division proteins. The polypeptide is Cell division protein ZipA (Pseudomonas aeruginosa (strain LESB58)).